The sequence spans 86 residues: Omega-theraphotoxin-Hhn1b (86 aa).

Positions 1 to 21 are cleaved as a signal peptide; it reads MKSIVFVALFGLALLAVVCSA. A propeptide spanning residues 22 to 50 is cleaved from the precursor; it reads SEDAHKELLKEVVRAMVVDKTDAVQAEER. Cystine bridges form between C52/C66, C59/C71, and C65/C78.

Belongs to the neurotoxin 10 (Hwtx-1) family. 17 (Hntx-9) subfamily. As to expression, expressed by the venom gland.

It is found in the secreted. Ion channel inhibitor. The polypeptide is Omega-theraphotoxin-Hhn1b (Cyriopagopus hainanus (Chinese bird spider)).